A 395-amino-acid polypeptide reads, in one-letter code: Elongation factor Tu (395 aa).

Positions Lys6–Ile205 constitute a tr-type G domain. The tract at residues Gly15 to Thr22 is G1. A GTP-binding site is contributed by Gly15–Thr22. Thr22 is a binding site for Mg(2+). Residues Gly59–Ser63 form a G2 region. The segment at Asp80 to Gly83 is G3. Residues Asp80–His84 and Asn135–Asp138 each bind GTP. The G4 stretch occupies residues Asn135–Asp138. Positions Ser173–Val175 are G5.

This sequence belongs to the TRAFAC class translation factor GTPase superfamily. Classic translation factor GTPase family. EF-Tu/EF-1A subfamily. Monomer.

It localises to the cytoplasm. The catalysed reaction is GTP + H2O = GDP + phosphate + H(+). In terms of biological role, GTP hydrolase that promotes the GTP-dependent binding of aminoacyl-tRNA to the A-site of ribosomes during protein biosynthesis. In Ehrlichia ruminantium (strain Gardel), this protein is Elongation factor Tu.